Consider the following 352-residue polypeptide: Sperm equatorial segment protein 1 (352 aa).

The first 19 residues, 1–19, serve as a signal peptide directing secretion; the sequence is MKSLVLLVALLLWSSSVPA. Asn-128 carries an N-linked (GlcNAc...) asparagine glycan. Positions 140–203 are disordered; that stretch reads IEKEEPEPEP…TESEDVPQLS (64 aa). A compositionally biased stretch (polar residues) spans 166-193; sequence TESSTSPYVTSYKSPVTTSDRSTGIEIS.

The protein belongs to the SPESP1 family. Glycosylated. In testis there are two predominant forms of 77- and 67-kDa and a form of 47-kDa, whereas in epididymal sperm from caput, corpus, and cauda there are two forms of 47- and 43-kDa. Testis forms contain complex carbohydrate residues. Epididymal sperm forms are N-glycosylated. Then undergoes significant glycosylation in the testis and that the majority of these glycoconjugates are removed by the time sperm reach the caput epididymis.

It localises to the cytoplasmic vesicle. Its subcellular location is the secretory vesicle. The protein localises to the acrosome. Its function is as follows. Involved in fertilization ability of sperm. This Macaca fascicularis (Crab-eating macaque) protein is Sperm equatorial segment protein 1.